Reading from the N-terminus, the 49-residue chain is Large ribosomal subunit protein bL33B (49 aa).

Belongs to the bacterial ribosomal protein bL33 family.

The sequence is that of Large ribosomal subunit protein bL33B from Bacillus cytotoxicus (strain DSM 22905 / CIP 110041 / 391-98 / NVH 391-98).